Reading from the N-terminus, the 356-residue chain is Cyclin-D2-2 (356 aa).

The segment covering 325–343 (LGSSQSNSNNKDYNSQDSA) has biased composition (polar residues). Residues 325–356 (LGSSQSNSNNKDYNSQDSAPASKRRRLNTTPI) form a disordered region. The segment covering 346 to 356 (SKRRRLNTTPI) has biased composition (basic residues).

The protein belongs to the cyclin family. Cyclin D subfamily.

The chain is Cyclin-D2-2 (CYCD2-2) from Oryza sativa subsp. japonica (Rice).